Here is a 347-residue protein sequence, read N- to C-terminus: MAATPDREKALEAALAQIDKQFGKGSIMRLGDDTRAPIEVIPTGSIALDVALGIGGLPRGRVVEIYGPESSGKTTVALHAVANAQRAGGIAAFIDAEHALDPDYAAKLGVDTDALLVSQPDTGEQALEIMDMLVGSGSLDIVVIDSVAALVPRAEIEGEMGDSHVGLQARLMSQALRKITGRLSQTKTTAIFINQLREKIGVFFGSPETTTGGKALKFYASVRIDVRRIQTLKEGADSVGNRTKAKIVKNKMAPPFKIAEFDIIYGQGISREGGIIDMGVEHGIIKKSGSWFTYDGDQLGQGMENSRRFLRDNPELAQELERLIKEKLGVGVVKTEEDSPKLKAVDG.

67-74 provides a ligand contact to ATP; sequence GPESSGKT.

The protein belongs to the RecA family.

The protein resides in the cytoplasm. Can catalyze the hydrolysis of ATP in the presence of single-stranded DNA, the ATP-dependent uptake of single-stranded DNA by duplex DNA, and the ATP-dependent hybridization of homologous single-stranded DNAs. It interacts with LexA causing its activation and leading to its autocatalytic cleavage. The chain is Protein RecA from Paenarthrobacter aurescens (strain TC1).